The primary structure comprises 524 residues: GMP synthase [glutamine-hydrolyzing] (524 aa).

The Glutamine amidotransferase type-1 domain maps to 9–207 (RILILDFGSQ…VIHICQCIPN (199 aa)). The active-site Nucleophile is C86. Residues H181 and E183 contribute to the active site. Positions 208–399 (WTTKHIIEDS…LGLPADLIYR (192 aa)) constitute a GMPS ATP-PPase domain. ATP is bound at residue 235 to 241 (SGGVDSA).

In terms of assembly, homodimer.

It catalyses the reaction XMP + L-glutamine + ATP + H2O = GMP + L-glutamate + AMP + diphosphate + 2 H(+). It participates in purine metabolism; GMP biosynthesis; GMP from XMP (L-Gln route): step 1/1. Its function is as follows. Catalyzes the synthesis of GMP from XMP. The protein is GMP synthase [glutamine-hydrolyzing] of Coxiella burnetii (strain RSA 493 / Nine Mile phase I).